The following is a 492-amino-acid chain: Catalase (492 aa).

Residues H65 and N138 contribute to the active site. Y348 is a binding site for heme.

It belongs to the catalase family. As to quaternary structure, homotetramer. It depends on heme as a cofactor. As to expression, in stems, leaves, roots and developing fruits.

It localises to the cytoplasm. The protein localises to the cytosol. The protein resides in the peroxisome matrix. The catalysed reaction is 2 H2O2 = O2 + 2 H2O. Functionally, catalyzes the degradation of hydrogen peroxide (H(2)O(2)) generated by peroxisomal oxidases to water and oxygen, thereby protecting cells from the toxic effects of hydrogen peroxide. This Capsicum annuum (Capsicum pepper) protein is Catalase (CAT).